We begin with the raw amino-acid sequence, 298 residues long: Tyrosine recombinase XerC (298 aa).

Positions 2-88 constitute a Core-binding (CB) domain; that stretch reads TDLHTDVERY…ALRSFFDWLV (87 aa). The 180-residue stretch at 109–288 folds into the Tyr recombinase domain; that stretch reads HLPKNIDVDD…DFQHLASVYD (180 aa). Active-site residues include arginine 148, lysine 172, histidine 240, arginine 243, and histidine 266. Tyrosine 275 acts as the O-(3'-phospho-DNA)-tyrosine intermediate in catalysis.

It belongs to the 'phage' integrase family. XerC subfamily. As to quaternary structure, forms a cyclic heterotetrameric complex composed of two molecules of XerC and two molecules of XerD, in which XerC interacts with XerD via its C-terminal region, XerD interacts with XerC via its C-terminal region and so on.

The protein localises to the cytoplasm. Its activity is regulated as follows. FtsK may regulate the catalytic switch between XerC and XerD in the heterotetrameric complex during the two steps of the recombination process. Its function is as follows. Site-specific tyrosine recombinase, which acts by catalyzing the cutting and rejoining of the recombining DNA molecules. Binds cooperatively to specific DNA consensus sequences that are separated from XerD binding sites by a short central region, forming the heterotetrameric XerC-XerD complex that recombines DNA substrates. The complex is essential to convert dimers of the bacterial chromosome into monomers to permit their segregation at cell division. It also contributes to the segregational stability of plasmids. In the complex XerC specifically exchanges the top DNA strands. This chain is Tyrosine recombinase XerC, found in Escherichia coli (strain 55989 / EAEC).